The primary structure comprises 447 residues: Cobyrinate a,c-diamide synthase (447 aa).

Residues 252–439 enclose the GATase cobBQ-type domain; sequence KIAVAFDESF…AHQHCIGNPY (188 aa). Cys331 serves as the catalytic Nucleophile.

Belongs to the CobB/CbiA family. Mg(2+) is required as a cofactor.

It carries out the reaction cob(II)yrinate + 2 L-glutamine + 2 ATP + 2 H2O = cob(II)yrinate a,c diamide + 2 L-glutamate + 2 ADP + 2 phosphate + 2 H(+). The enzyme catalyses Ni-sirohydrochlorin + 2 L-glutamine + 2 ATP + 2 H2O = Ni-sirohydrochlorin a,c-diamide + 2 L-glutamate + 2 ADP + 2 phosphate + 2 H(+). The protein operates within cofactor biosynthesis; adenosylcobalamin biosynthesis; cob(II)yrinate a,c-diamide from sirohydrochlorin (anaerobic route): step 10/10. In terms of biological role, catalyzes the ATP-dependent amidation of the two carboxylate groups at positions a and c of cobyrinate, using either L-glutamine or ammonia as the nitrogen source. Involved in the biosynthesis of the unique nickel-containing tetrapyrrole coenzyme F430, the prosthetic group of methyl-coenzyme M reductase (MCR), which plays a key role in methanogenesis and anaerobic methane oxidation. Catalyzes the ATP-dependent amidation of the two carboxylate groups at positions a and c of Ni-sirohydrochlorin, using L-glutamine or ammonia as the nitrogen source. This is Cobyrinate a,c-diamide synthase from Methanococcus maripaludis (strain C5 / ATCC BAA-1333).